A 388-amino-acid chain; its full sequence is UDP-galactose transporter senju (388 aa).

10 helical membrane passes run 13 to 33, 46 to 66, 84 to 104, 113 to 133, 142 to 162, 202 to 222, 236 to 256, 276 to 296, 309 to 329, and 331 to 351; these read LTFV…IFVT, TVTV…CLYC, VLGL…LAFV, TYYL…QIIF, WISL…FGSF, FSLS…AGVY, IFVQ…VILL, FSVL…SFFL, ALEL…PIYM, and TALA…SPVV.

The protein belongs to the nucleotide-sugar transporter family.

The protein localises to the golgi apparatus membrane. UDP-galactose transporter involved in the synthesis of galactose-containing glycans. Plays a role in quiescence of the innate immune response, possibly by regulating glycosylation of the Toll pathway ligand spz. The protein is UDP-galactose transporter senju of Drosophila melanogaster (Fruit fly).